We begin with the raw amino-acid sequence, 284 residues long: uncharacterized protein (284 aa).

Gln-54 provides a ligand contact to FMN. Cys-83 (proton donor) is an active-site residue. Residues Lys-125, His-153, 183–185 (NGG), and 207–208 (AN) contribute to the FMN site.

It belongs to the Dus family. It depends on FMN as a cofactor.

In terms of biological role, catalyzes the synthesis of dihydrouridine, a modified base found in the D-loop of most tRNAs. This is an uncharacterized protein from Caenorhabditis elegans.